A 288-amino-acid polypeptide reads, in one-letter code: Bifunctional protein FolD (288 aa).

Residues 164-166 (GTS) and I230 contribute to the NADP(+) site.

Belongs to the tetrahydrofolate dehydrogenase/cyclohydrolase family. As to quaternary structure, homodimer.

The catalysed reaction is (6R)-5,10-methylene-5,6,7,8-tetrahydrofolate + NADP(+) = (6R)-5,10-methenyltetrahydrofolate + NADPH. The enzyme catalyses (6R)-5,10-methenyltetrahydrofolate + H2O = (6R)-10-formyltetrahydrofolate + H(+). It participates in one-carbon metabolism; tetrahydrofolate interconversion. Its function is as follows. Catalyzes the oxidation of 5,10-methylenetetrahydrofolate to 5,10-methenyltetrahydrofolate and then the hydrolysis of 5,10-methenyltetrahydrofolate to 10-formyltetrahydrofolate. The protein is Bifunctional protein FolD of Mycoplasma mycoides subsp. mycoides SC (strain CCUG 32753 / NCTC 10114 / PG1).